We begin with the raw amino-acid sequence, 95 residues long: Antitoxin VapB (95 aa).

In terms of biological role, antitoxin component of a type II toxin-antitoxin (TA) system. Partially neutralizes the RNase activity of cognate toxin VapC. The protein is Antitoxin VapB of Rickettsia bellii (strain RML369-C).